Consider the following 830-residue polypeptide: Lon protease 3 (830 aa).

The Lon N-terminal domain occupies 19 to 213 (VPLLPLRDII…RLIELMQAEI (195 aa)). An ATP-binding site is contributed by 367–374 (GPPGVGKT). In terms of domain architecture, Lon proteolytic spans 604–784 (RDEVGLVNGL…DDVLREALIL (181 aa)). Active-site residues include S690 and K733. A compositionally biased stretch (low complexity) spans 811 to 823 (PVKAPPAAAGEPT). Residues 811–830 (PVKAPPAAAGEPTPAAPPGA) form a disordered region.

The protein belongs to the peptidase S16 family. As to quaternary structure, homohexamer. Organized in a ring with a central cavity.

It localises to the cytoplasm. It carries out the reaction Hydrolysis of proteins in presence of ATP.. Functionally, ATP-dependent serine protease that mediates the selective degradation of mutant and abnormal proteins as well as certain short-lived regulatory proteins. Required for cellular homeostasis and for survival from DNA damage and developmental changes induced by stress. Degrades polypeptides processively to yield small peptide fragments that are 5 to 10 amino acids long. Binds to DNA in a double-stranded, site-specific manner. The chain is Lon protease 3 from Sorangium cellulosum (strain So ce56) (Polyangium cellulosum (strain So ce56)).